Reading from the N-terminus, the 224-residue chain is Phosphoribosylformylglycinamidine synthase subunit PurQ (224 aa).

The 223-residue stretch at 2 to 224 (KVTILQFPGT…IKMLQGFLRA (223 aa)) folds into the Glutamine amidotransferase type-1 domain. Catalysis depends on cysteine 86, which acts as the Nucleophile. Residues histidine 200 and glutamate 202 contribute to the active site.

As to quaternary structure, part of the FGAM synthase complex composed of 1 PurL, 1 PurQ and 2 PurS subunits.

The protein localises to the cytoplasm. It carries out the reaction N(2)-formyl-N(1)-(5-phospho-beta-D-ribosyl)glycinamide + L-glutamine + ATP + H2O = 2-formamido-N(1)-(5-O-phospho-beta-D-ribosyl)acetamidine + L-glutamate + ADP + phosphate + H(+). It catalyses the reaction L-glutamine + H2O = L-glutamate + NH4(+). It participates in purine metabolism; IMP biosynthesis via de novo pathway; 5-amino-1-(5-phospho-D-ribosyl)imidazole from N(2)-formyl-N(1)-(5-phospho-D-ribosyl)glycinamide: step 1/2. Its function is as follows. Part of the phosphoribosylformylglycinamidine synthase complex involved in the purines biosynthetic pathway. Catalyzes the ATP-dependent conversion of formylglycinamide ribonucleotide (FGAR) and glutamine to yield formylglycinamidine ribonucleotide (FGAM) and glutamate. The FGAM synthase complex is composed of three subunits. PurQ produces an ammonia molecule by converting glutamine to glutamate. PurL transfers the ammonia molecule to FGAR to form FGAM in an ATP-dependent manner. PurS interacts with PurQ and PurL and is thought to assist in the transfer of the ammonia molecule from PurQ to PurL. This Sulfurimonas denitrificans (strain ATCC 33889 / DSM 1251) (Thiomicrospira denitrificans (strain ATCC 33889 / DSM 1251)) protein is Phosphoribosylformylglycinamidine synthase subunit PurQ.